The chain runs to 491 residues: Probable cytosol aminopeptidase (491 aa).

2 residues coordinate Mn(2+): Lys-264 and Asp-269. Lys-276 is a catalytic residue. Positions 287, 346, and 348 each coordinate Mn(2+). Arg-350 is an active-site residue.

The protein belongs to the peptidase M17 family. It depends on Mn(2+) as a cofactor.

It localises to the cytoplasm. The enzyme catalyses Release of an N-terminal amino acid, Xaa-|-Yaa-, in which Xaa is preferably Leu, but may be other amino acids including Pro although not Arg or Lys, and Yaa may be Pro. Amino acid amides and methyl esters are also readily hydrolyzed, but rates on arylamides are exceedingly low.. It catalyses the reaction Release of an N-terminal amino acid, preferentially leucine, but not glutamic or aspartic acids.. Its function is as follows. Presumably involved in the processing and regular turnover of intracellular proteins. Catalyzes the removal of unsubstituted N-terminal amino acids from various peptides. In Xylella fastidiosa (strain Temecula1 / ATCC 700964), this protein is Probable cytosol aminopeptidase.